A 599-amino-acid polypeptide reads, in one-letter code: NADH-quinone oxidoreductase subunit C/D (599 aa).

Residues 1–190 (MMIDQIAQES…DPFELTRQKE (190 aa)) are NADH dehydrogenase I subunit C. The NADH dehydrogenase I subunit D stretch occupies residues 214–599 (DFMFLNLGPN…IDFVMSDVDR (386 aa)).

The protein in the N-terminal section; belongs to the complex I 30 kDa subunit family. In the C-terminal section; belongs to the complex I 49 kDa subunit family. As to quaternary structure, NDH-1 is composed of 13 different subunits. Subunits NuoB, CD, E, F, and G constitute the peripheral sector of the complex.

It localises to the cell inner membrane. It carries out the reaction a quinone + NADH + 5 H(+)(in) = a quinol + NAD(+) + 4 H(+)(out). NDH-1 shuttles electrons from NADH, via FMN and iron-sulfur (Fe-S) centers, to quinones in the respiratory chain. The immediate electron acceptor for the enzyme in this species is believed to be ubiquinone. Couples the redox reaction to proton translocation (for every two electrons transferred, four hydrogen ions are translocated across the cytoplasmic membrane), and thus conserves the redox energy in a proton gradient. The polypeptide is NADH-quinone oxidoreductase subunit C/D (Photorhabdus laumondii subsp. laumondii (strain DSM 15139 / CIP 105565 / TT01) (Photorhabdus luminescens subsp. laumondii)).